We begin with the raw amino-acid sequence, 288 residues long: Beta-lactamase CARB-3 (288 aa).

The first 17 residues, 1-17 (MKFLLAFSLLIPSVVFA), serve as a signal peptide directing secretion. Ser-65 serves as the catalytic Acyl-ester intermediate. An intrachain disulfide couples Cys-72 to Cys-118. Residue 229–231 (RSG) coordinates substrate.

Belongs to the class-A beta-lactamase family.

It carries out the reaction a beta-lactam + H2O = a substituted beta-amino acid. In terms of biological role, hydrolyzes both carbenicillin and oxacillin. The polypeptide is Beta-lactamase CARB-3 (carB3) (Pseudomonas aeruginosa).